The chain runs to 378 residues: Protein RecA (378 aa).

An ATP-binding site is contributed by 79–86 (GPESSGKT).

This sequence belongs to the RecA family.

It is found in the cytoplasm. Functionally, can catalyze the hydrolysis of ATP in the presence of single-stranded DNA, the ATP-dependent uptake of single-stranded DNA by duplex DNA, and the ATP-dependent hybridization of homologous single-stranded DNAs. It interacts with LexA causing its activation and leading to its autocatalytic cleavage. In Streptococcus pyogenes serotype M28 (strain MGAS6180), this protein is Protein RecA.